Consider the following 470-residue polypeptide: Cytochrome P450 monooxygenase FUM2 (470 aa).

C414 serves as a coordination point for heme.

The protein belongs to the cytochrome P450 family. Heme is required as a cofactor.

The protein operates within mycotoxin biosynthesis. Functionally, cytochrome P450 monooxygenase; part of the gene cluster that mediates the biosynthesis of fumonisins B1 (FB1), B2 (FB2), B3 (FB3), and B4 (FB4), which are carcinogenic mycotoxins. Within the pathway, FUM2 performs the C-10 hydroxylation present in FB2 and FB4 and which occurs early in the biosynthesis. The biosynthesis starts with the FUM1-catalyzed carbon chain assembly from one molecule of acetyl-CoA, eight molecules of malonyl-CoA, and two molecules of methionine (in S-adenosyl form). The C18 polyketide chain is released from the enzyme by a nucleophilic attack of a carbanion, which is derived from R-carbon of alanine by decarboxylation, on the carbonyl carbon of polyketide acyl chain. This step is catalyzed by the pyridoxal 5'-phosphate-dependent aminoacyl transferase FUM8. The resultant 3-keto intermediate is then stereospecifically reduced to a 3-hydroxyl product by reductase FUM13. Subsequent oxidations at C-10 by the cytochrome P450 monooxygenase FUM2, C-14 and C-15 by FUM6, FUM12 or FUM15, tricarballylic esterification of the hydroxyl groups on C-14 and C-15 by acyltransferase FUM14, and C-5 hydroxylation by 2-keto-glutarate-dependent dioxygenase FUM3 furnish the biosynthesis of fumonisins. The tricarballylic moieties are most likely derived from the citric acid cycle, and their addition to the carbon backbone may involve FUM7, FUM10, FUM11 and FUM14. This Gibberella moniliformis (strain M3125 / FGSC 7600) (Maize ear and stalk rot fungus) protein is Cytochrome P450 monooxygenase FUM2.